We begin with the raw amino-acid sequence, 28 residues long: M-poneritoxin-Dq4a (28 aa).

Alanine amide is present on A28.

In terms of tissue distribution, expressed by the venom gland.

The protein localises to the secreted. In terms of biological role, the synthetic peptide has weak antimicrobial activity against Gram-negative bacterium E.coli ATCC 10536. It does not show antimicrobial activity against the Gram-positive bacteria B.amyloliquefacies S499, L.monocytogenes 2231 and S.aureus ATCC 29213, against the Gram-negative bacteria P.putida BTP1 and P.aeruginosa PaO1, or against the fungi S.cerevisiae, R.mucilaginosa, C.cucumerinum, F.oxysporum and B.cinerea. This chain is M-poneritoxin-Dq4a, found in Dinoponera quadriceps (South American ant).